Here is a 375-residue protein sequence, read N- to C-terminus: Xylose transport system permease protein XylH (375 aa).

10 helical membrane-spanning segments follow: residues 9–29 (LQVYIMLIAIAVIMAFFSVAT), 52–72 (LAIGMVFVIISAEIDLSVGSL), 85–105 (VWWGFPLPVTIIATIALGLIF), 118–138 (VPSFIVTLAGYLAFRGILIGL), 159–179 (LSDIAGVILGGIAVIGFVLWG), 199–219 (DFTKYALFAVIVLGAIYLLND), 220–240 (YRGIPFPVLVLAVLAILGLFL), 271–291 (KLIIFAMNGVLVAIAGLILSA), 319–339 (LAGGVGSVFGVVIGALIIASL), and 348–368 (VPTFWQYIVKGGILLLAVWID).

It belongs to the binding-protein-dependent transport system permease family. AraH/RbsC subfamily.

The protein localises to the cell inner membrane. Functionally, part of the binding-protein-dependent transport system for D-xylose. Probably responsible for the translocation of the substrate across the membrane. This Haemophilus influenzae (strain ATCC 51907 / DSM 11121 / KW20 / Rd) protein is Xylose transport system permease protein XylH (xylH).